The primary structure comprises 662 residues: Hypoxia-inducible factor 3-alpha (662 aa).

The tract at residues 1-25 (MDWDQDRSSTELRKEKSRDAARSRR) is disordered. The 54-residue stretch at 12-65 (LRKEKSRDAARSRRSQETEVLYQLAHTLPFARGVSAHLDKASIMRLTISYLRMH) folds into the bHLH domain. A nuclear localization signal region spans residues 75–98 (QVRKEGEPLDACYLKALEGFVMVL). PAS domains follow at residues 80–150 (GEPL…PSLS) and 225–295 (PHPA…LSKG). Residues 228–272 (ASLEPPLGRGAFLSRHSLDMKFTYCDERIAEVAGYSPDDLIGCSA) are nuclear export signal. Residues 352–379 (EQTEQHTRRPPQLGTSSKKGIPGNSLDP) are disordered. An LRRLL motif is present at residues 410 to 413 (LRRL). Disordered stretches follow at residues 417–445 (ILDGPPTAATPSTPQAARRPQSPLPADLP) and 459–480 (STARKNKTMETDLDIAQDPDTP). The segment covering 421–433 (PPTAATPSTPQAA) has biased composition (low complexity). The segment at 448 to 581 (LAVGLENAHR…SEDKGLELLE (134 aa)) is ODD. The interval 450–501 (VGLENAHRLSTARKNKTMETDLDIAQDPDTPDLEMLAPYISMDDDFQLNSSE) is NTAD. K463 participates in a covalent cross-link: Glycyl lysine isopeptide (Lys-Gly) (interchain with G-Cter in ubiquitin). Over residues 469–480 (TDLDIAQDPDTP) the composition is skewed to acidic residues. The short motif at 485–492 (LAPYISMD) is the LAPYISMD element. P487 bears the 4-hydroxyproline mark. Residues 500 to 595 (SEQLPKVHRR…KRSPRLEPGS (96 aa)) form a disordered region. Residues 505-521 (KVHRRPPRTARRPRARS) show a composition bias toward basic residues. A Glycyl lysine isopeptide (Lys-Gly) (interchain with G-Cter in ubiquitin) cross-link involves residue K565. A compositionally biased stretch (basic and acidic residues) spans 572-584 (SEDKGLELLETKP).

As to quaternary structure, interacts with ARNT, BAD, BCL2L2, EPAS1, HIF1A, MCL1 and VHL. Post-translationally, in normoxia, hydroxylated on Pro-487 in the oxygen-dependent degradation domain (ODD) by PHD. The hydroxylated proline promotes interaction with VHL, initiating rapid ubiquitination and subsequent proteasomal degradation. In terms of processing, ubiquitinated; ubiquitination occurs in a VHL- and oxygen-dependent pathway and subsequently targeted for proteasomal degradation. As to expression, expressed in the perivenous zone of the liver. Expressed in all tissues examined during normoxia. Expressed in brain and lung. Expressed in periportal and perivenous hepatocytes and in endothelial cells of the central vein (at protein level). Highest expression seen in the cerebral cortex, hippocampus, and lung. Low expression in myocardial tissue and liver.

The protein resides in the nucleus. It localises to the cytoplasm. Its subcellular location is the nucleus speckle. The protein localises to the mitochondrion. Functionally, acts as a transcriptional regulator in adaptive response to low oxygen tension. Attenuates the ability of transcription factor HIF1A, EPAS1 and the HIF1A-ARNT complex to bind to hypoxia-responsive elements (HRE) located within the enhancer/promoter of hypoxia-inducible target genes and hence inhibits HRE-driven transcriptional activation. Functions as an inhibitor of angiogenesis in hypoxic cells of the cornea. Plays a role in the development of the cardiorespiratory system. May also be involved in apoptosis. May act as a tumor suppressor. This is Hypoxia-inducible factor 3-alpha from Rattus norvegicus (Rat).